Here is a 91-residue protein sequence, read N- to C-terminus: MGLEDERKMLTESGDPEKEEEEEEELVDPLTTVREQCEQLEKCVKARERLELCDKRVSSRSRTEEDCTEELLDFLHARDHCVAYKLFNNLK.

Residues 1-10 show a composition bias toward basic and acidic residues; sequence MGLEDERKML. A mitochondrion-targeting transit peptide spans 1–13; sequence MGLEDERKMLTES. Residues 1–30 are disordered; sequence MGLEDERKMLTESGDPEKEEEEEEELVDPL. Positions 17 to 27 are enriched in acidic residues; sequence EKEEEEEEELV. Intrachain disulfides connect cysteine 37-cysteine 81 and cysteine 53-cysteine 67. An N6-acetyllysine modification is found at lysine 42. Position 85 is an N6-acetyllysine (lysine 85).

Belongs to the UQCRH/QCR6 family. As to quaternary structure, component of the ubiquinol-cytochrome c oxidoreductase (cytochrome b-c1 complex, complex III, CIII), a multisubunit enzyme composed of 11 subunits. The complex is composed of 3 respiratory subunits cytochrome b, cytochrome c1 and Rieske protein UQCRFS1, 2 core protein subunits UQCRC1/QCR1 and UQCRC2/QCR2, and 6 low-molecular weight protein subunits UQCRH/QCR6, UQCRB/QCR7, UQCRQ/QCR8, UQCR10/QCR9, UQCR11/QCR10 and subunit 9, the cleavage product of Rieske protein UQCRFS1. The complex exists as an obligatory dimer and forms supercomplexes (SCs) in the inner mitochondrial membrane with NADH-ubiquinone oxidoreductase (complex I, CI) and cytochrome c oxidase (complex IV, CIV), resulting in different assemblies (supercomplex SCI(1)III(2)IV(1) and megacomplex MCI(2)III(2)IV(2)).

It is found in the mitochondrion inner membrane. Functionally, component of the ubiquinol-cytochrome c oxidoreductase, a multisubunit transmembrane complex that is part of the mitochondrial electron transport chain which drives oxidative phosphorylation. The respiratory chain contains 3 multisubunit complexes succinate dehydrogenase (complex II, CII), ubiquinol-cytochrome c oxidoreductase (cytochrome b-c1 complex, complex III, CIII) and cytochrome c oxidase (complex IV, CIV), that cooperate to transfer electrons derived from NADH and succinate to molecular oxygen, creating an electrochemical gradient over the inner membrane that drives transmembrane transport and the ATP synthase. The cytochrome b-c1 complex catalyzes electron transfer from ubiquinol to cytochrome c, linking this redox reaction to translocation of protons across the mitochondrial inner membrane, with protons being carried across the membrane as hydrogens on the quinol. In the process called Q cycle, 2 protons are consumed from the matrix, 4 protons are released into the intermembrane space and 2 electrons are passed to cytochrome c. This Macaca fascicularis (Crab-eating macaque) protein is Cytochrome b-c1 complex subunit 6, mitochondrial (UQCRH).